The following is a 787-amino-acid chain: Serine/threonine-protein kinase SCH9 (787 aa).

3 disordered regions span residues 1–82 (MVDF…QSGT), 132–172 (PQQQ…GSSQ), and 238–280 (SPVS…LFGQ). Low complexity predominate over residues 132–155 (PQQQQQQQAQQPPPEQQQSSAPYQ). 2 stretches are compositionally biased toward polar residues: residues 156–172 (NSAN…GSSQ) and 239–263 (PVSS…SNHG). Positions 182–354 (DKTGNKLSPA…KNNKNESEWL (173 aa)) constitute a C2 domain. Positions 392 to 653 (FHFLRLLGKG…ARELKAHPFF (262 aa)) constitute a Protein kinase domain. ATP is bound by residues 398–406 (LGKGTFGQV) and Lys-421. Residue Asp-518 is the Proton acceptor of the active site. Residues 654 to 729 (ADIDWDLLRA…VDDSTMDDHF (76 aa)) form the AGC-kinase C-terminal domain.

This sequence belongs to the protein kinase superfamily. AGC Ser/Thr protein kinase family. cAMP subfamily.

The enzyme catalyses L-seryl-[protein] + ATP = O-phospho-L-seryl-[protein] + ADP + H(+). It catalyses the reaction L-threonyl-[protein] + ATP = O-phospho-L-threonyl-[protein] + ADP + H(+). Protein kinase that is part of growth control pathway which is at least partially redundant with the cAMP pathway. Plays a role in filamentous growth and virulence. Prevents hypha formation specifically under hypoxia at high CO(2) levels. Required for chlamydospore formation, distinctive morphological feature of the fungal pathogen C.albicans that can be induced to form in oxygen-limited environments and has been reported in clinical specimens. The polypeptide is Serine/threonine-protein kinase SCH9 (SCH9) (Candida albicans (strain SC5314 / ATCC MYA-2876) (Yeast)).